The sequence spans 675 residues: 1,4-alpha-glucan branching enzyme TK1436 (675 aa).

The active-site Nucleophile is the Glu-183. Substrate is bound by residues Arg-261 and Gly-278. Catalysis depends on Asp-354, which acts as the Proton donor. Positions 407, 467, and 476 each coordinate substrate. Disordered stretches follow at residues 537–563 (PELE…KVLT) and 581–627 (EETR…LSIK). Composition is skewed to basic and acidic residues over residues 549–563 (PPEK…KVLT) and 581–595 (EETR…EASK). Residues 596–616 (RGKRKSSKSKRLPRKVSKKAP) show a composition bias toward basic residues.

It belongs to the glycosyl hydrolase 57 family. As to quaternary structure, monomer.

The enzyme catalyses Transfers a segment of a (1-&gt;4)-alpha-D-glucan chain to a primary hydroxy group in a similar glucan chain.. In terms of biological role, catalyzes the formation of branch points in alpha-glucans by cleavage of an alpha-1,4 glycosidic bond and subsequent transfer of the cleaved-off oligosaccharide to a new alpha-1,6 position. The branch chain-length distribution of the reaction products shows degree of polymerization (DP) of 5 to 30, with two local maxima at DP 6 and DP 11. Exhibits an alpha-retaining catalytic mechanism. Does not display alpha-galactosidase or pullulanase activity, since melibiose and pullulan are not substrates. Is not able to catalyze the hydrolysis or transglycosylation of maltoheptaose, suggesting that the TK1436 protein contains neither alpha-amylase nor 4-alpha-glucanotransferase activity. The polypeptide is 1,4-alpha-glucan branching enzyme TK1436 (Thermococcus kodakarensis (strain ATCC BAA-918 / JCM 12380 / KOD1) (Pyrococcus kodakaraensis (strain KOD1))).